The sequence spans 333 residues: NADH-quinone oxidoreductase subunit H (333 aa).

8 helical membrane-spanning segments follow: residues I17–I37, F88–F108, I117–T137, I159–L179, V191–E211, F241–F261, F273–W293, and V313–F333.

The protein belongs to the complex I subunit 1 family. As to quaternary structure, NDH-1 is composed of 14 different subunits. Subunits NuoA, H, J, K, L, M, N constitute the membrane sector of the complex.

Its subcellular location is the cell membrane. It catalyses the reaction a quinone + NADH + 5 H(+)(in) = a quinol + NAD(+) + 4 H(+)(out). In terms of biological role, NDH-1 shuttles electrons from NADH, via FMN and iron-sulfur (Fe-S) centers, to quinones in the respiratory chain. The immediate electron acceptor for the enzyme in this species is believed to be ubiquinone. Couples the redox reaction to proton translocation (for every two electrons transferred, four hydrogen ions are translocated across the cytoplasmic membrane), and thus conserves the redox energy in a proton gradient. This subunit may bind ubiquinone. This chain is NADH-quinone oxidoreductase subunit H, found in Anoxybacillus flavithermus (strain DSM 21510 / WK1).